A 748-amino-acid chain; its full sequence is Far upstream element-binding protein 2 (748 aa).

Positions 1–78 are disordered; that stretch reads MSDYNTGGPP…GIRKDAFADA (78 aa). An N-acetylserine modification is found at serine 2. Over residues 8 to 17 the composition is skewed to pro residues; sequence GPPPGPPPPA. Composition is skewed to gly residues over residues 18-28 and 36-69; these read GGGGGAAGAGG and GAGDRGGGGPGGGGPGGGGASGGPSQPPGGGGPG. At arginine 40 the chain carries Omega-N-methylarginine. N6-acetyllysine is present on lysine 88. Residues 90-148 form a disordered region; sequence GGDAATTVNNNTPDFGFGGQKRQLEDGDQPDSKKLASQGDSIGSQLGPIHPPPRTSMTE. Threonine 101 carries the post-translational modification Phosphothreonine. Residues 111 to 123 show a composition bias toward basic and acidic residues; sequence RQLEDGDQPDSKK. Lysine 122 participates in a covalent cross-link: Glycyl lysine isopeptide (Lys-Gly) (interchain with G-Cter in SUMO1); alternate. Residue lysine 122 forms a Glycyl lysine isopeptide (Lys-Gly) (interchain with G-Cter in SUMO2); alternate linkage. Residues serine 126, serine 130, serine 182, serine 185, serine 194, and serine 275 each carry the phosphoserine modification. KH domains lie at 145–209, 234–300, and 323–387; these read SMTE…KMML, GTVQ…CEMV, and GGGI…ARII. Residues 394-422 form a disordered region; sequence LRSGPPGPPGAPGMPPGGRGRGRGQGNWG. The span at 398–408 shows a compositional bias: pro residues; it reads PPGPPGAPGMP. Positions 409–422 are enriched in gly residues; the sequence is PGGRGRGRGQGNWG. Residues arginine 412, arginine 414, arginine 416, and arginine 443 each carry the omega-N-methylarginine modification. Residues 425-492 form the KH 4 domain; it reads GGEMTFSIPT…QQIDHAKQLI (68 aa). At serine 481 the chain carries Phosphoserine. The disordered stretch occupies residues 498–570; the sequence is GPLCPVGPGP…HDPNKAAAAA (73 aa). 2 stretches are compositionally biased toward pro residues: residues 502–521 and 529–543; these read PVGPGPGGPGPAGPMGPFNP and PGAPPHAGGPPPHQY. The stretch at 572–583 is repeat 1; that stretch reads DPNAAWAAYYSH. The segment at 572–685 is 4 X 12 AA imperfect repeats; the sequence is DPNAAWAAYY…SAAWAEYYRQ (114 aa). The span at 588–614 shows a compositional bias: pro residues; sequence PPGPVPGPAPAPAAPPAQGEPPQPPPT. Disordered regions lie at residues 588-650, 659-678, and 689-735; these read PPGP…KAWE, VATGGGPGAPPGSQPDYSAA, and YYGQ…PALV. 3 repeat units span residues 618 to 629, 644 to 655, and 674 to 685.

This sequence belongs to the KHSRP family. In terms of assembly, part of a ternary complex containing FUBP2, PTBP1, PTBP2 and HNRPH1. Interacts with PARN. Interacts with PQBP1.

Its subcellular location is the nucleus. The protein localises to the cytoplasm. Its function is as follows. Binds to the dendritic targeting element and may play a role in mRNA trafficking. Part of a ternary complex that binds to the downstream control sequence (DCS) of the pre-mRNA. Mediates exon inclusion in transcripts that are subject to tissue-specific alternative splicing. May interact with single-stranded DNA from the far-upstream element (FUSE). May activate gene expression. Also involved in degradation of inherently unstable mRNAs that contain AU-rich elements (AREs) in their 3'-UTR, possibly by recruiting degradation machinery to ARE-containing mRNAs. The sequence is that of Far upstream element-binding protein 2 (Khsrp) from Mus musculus (Mouse).